Consider the following 234-residue polypeptide: Large ribosomal subunit protein uL1 (234 aa).

It belongs to the universal ribosomal protein uL1 family. Part of the 50S ribosomal subunit.

In terms of biological role, binds directly to 23S rRNA. The L1 stalk is quite mobile in the ribosome, and is involved in E site tRNA release. Protein L1 is also a translational repressor protein, it controls the translation of the L11 operon by binding to its mRNA. The polypeptide is Large ribosomal subunit protein uL1 (Prochlorococcus marinus (strain SARG / CCMP1375 / SS120)).